Here is a 410-residue protein sequence, read N- to C-terminus: Beta-arrestin-2 (410 aa).

Tyr-48 bears the Phosphotyrosine mark. 2 positions are modified to hydroxyproline; by PHD2: Pro-176 and Pro-181. An interaction with TRAF6 region spans residues 241–410 (ADICLFSTAQ…KDDDCDDQFC (170 aa)). Phosphoserine is present on Ser-361. Residues 378–410 (DTNYATDDDIVFEDFARLRLKGMKDDDCDDQFC) are interaction with AP2B1. Position 383 is a phosphothreonine; by CaMK2 (Thr-383). Residues 386 to 396 (DIVFEDFARLR) carry the [DE]-X(1,2)-F-X-X-[FL]-X-X-X-R motif motif.

The protein belongs to the arrestin family. Homooligomer; the self-association is mediated by InsP6-binding. Heterooligomer with ARRB1; the association is mediated by InsP6-binding. Interacts with ADRB2 and CHRM2. Interacts with PDE4A. Interacts with PDE4D. Interacts with MAPK10, MAPK1 and MAPK3. Interacts with DRD2. Interacts with FSHR. Interacts with CLTC. Interacts with HTR2C. Interacts with CCR5. Interacts with CXCR4. Interacts with SRC. Interacts with DUSP16; the interaction is interrupted by stimulation of AGTR1 and activation of MAPK10. Interacts with CHUK; the interaction is enhanced stimulation of ADRB2. Interacts with RELA. Interacts with MDM2; the interaction is enhanced by activation of GPCRs. Interacts with SLC9A5. Interacts with TRAF6. Interacts with IGF1R. Interacts with ENG. Interacts with KIR2DL1, KIR2DL3 and KIR2DL4. Interacts with LDLR. Interacts with AP2B1. Interacts with C5AR1. Interacts with RAF1. Interacts with MAP2K1. Interacts with MAPK1. Interacts with MAPK10; the interaction enhances MAPK10 activation by MAP3K5. Interacts with MAP2K4; the interaction is enhanced by presence of MAP3K5 and MAPK10. Interacts with MAP3K5. Interacts with AKT1. Interacts with IKBKB and MAP3K14. Interacts with SMO (activated). Interacts with GSK3A and GSK3B. Associates with protein phosphatase 2A (PP2A). Interacts with CXCR4; the interaction is dependent on C-terminal phosphorylation of CXCR4 and allows activation of MAPK1 and MAPK3. Interacts with GPR143. Interacts with HCK and CXCR1 (phosphorylated). Interacts with ACKR3 and ACKR4. Interacts with ARRDC1; the interaction is direct. Interacts with GPR61, GPR62 and GPR135. Interacts (via NACHT and LRR domains) with NLRP3; this interaction is direct and inducible by omega-3 polyunsaturated fatty acids (PUFAs). Interacts with FFAR4 (via C-terminus); this interaction is stimulated by long-chain fatty acids (LCFAs). Interacts with GPR35. Interacts with GPR84. Interacts with TIGIT; this interaction inhibits the NF-kappa-B pathway. Interacts with TGFBR3. In terms of processing, phosphorylated at Thr-383 in the cytoplasm; probably dephosphorylated at the plasma membrane. The phosphorylation does not regulate internalization and recycling of ADRB2, interaction with clathrin or AP2B1. Post-translationally, the ubiquitination status appears to regulate the formation and trafficking of beta-arrestin-GPCR complexes and signaling. Ubiquitination appears to occur GPCR-specific. Ubiquitinated by MDM2; the ubiquitination is required for rapid internalization of ADRB2. Deubiquitinated by USP33; the deubiquitination leads to a dissociation of the beta-arrestin-GPCR complex. Stimulation of a class A GPCR, such as ADRB2, induces transient ubiquitination and subsequently promotes association with USP33. Stimulation of a class B GPCR promotes a sustained ubiquitination. Deubiquitinated by USP20; allowing USP20 to deubiquitinate TRAF6 leading to inhibition of NF-kappa-B signaling. Hydroxylation by PHD2 modulates the rate of internalization by slowing down recruitment to the plasma membrane and inhibiting subsequent co-internalization with class A receptors. In terms of tissue distribution, predominantly localized in neuronal tissues and in the spleen.

The protein resides in the cytoplasm. It is found in the nucleus. Its subcellular location is the cell membrane. It localises to the membrane. The protein localises to the clathrin-coated pit. The protein resides in the cytoplasmic vesicle. Its function is as follows. Functions in regulating agonist-mediated G-protein coupled receptor (GPCR) signaling by mediating both receptor desensitization and resensitization processes. During homologous desensitization, beta-arrestins bind to the GPRK-phosphorylated receptor and sterically preclude its coupling to the cognate G-protein; the binding appears to require additional receptor determinants exposed only in the active receptor conformation. The beta-arrestins target many receptors for internalization by acting as endocytic adapters (CLASPs, clathrin-associated sorting proteins) and recruiting the GPRCs to the adapter protein 2 complex 2 (AP-2) in clathrin-coated pits (CCPs). However, the extent of beta-arrestin involvement appears to vary significantly depending on the receptor, agonist and cell type. Internalized arrestin-receptor complexes traffic to intracellular endosomes, where they remain uncoupled from G-proteins. Two different modes of arrestin-mediated internalization occur. Class A receptors, like ADRB2, OPRM1, ENDRA, D1AR and ADRA1B dissociate from beta-arrestin at or near the plasma membrane and undergo rapid recycling. Class B receptors, like AVPR2, AGTR1, NTSR1, TRHR and TACR1 internalize as a complex with arrestin and traffic with it to endosomal vesicles, presumably as desensitized receptors, for extended periods of time. Receptor resensitization then requires that receptor-bound arrestin is removed so that the receptor can be dephosphorylated and returned to the plasma membrane. Mediates endocytosis of CCR7 following ligation of CCL19 but not CCL21. Involved in internalization of P2RY1, P2RY4, P2RY6 and P2RY11 and ATP-stimulated internalization of P2RY2. Involved in phosphorylation-dependent internalization of OPRD1 and subsequent recycling or degradation. Involved in ubiquitination of IGF1R. Beta-arrestins function as multivalent adapter proteins that can switch the GPCR from a G-protein signaling mode that transmits short-lived signals from the plasma membrane via small molecule second messengers and ion channels to a beta-arrestin signaling mode that transmits a distinct set of signals that are initiated as the receptor internalizes and transits the intracellular compartment. Acts as a signaling scaffold for MAPK pathways such as MAPK1/3 (ERK1/2) and MAPK10 (JNK3). ERK1/2 and JNK3 activated by the beta-arrestin scaffold are largely excluded from the nucleus and confined to cytoplasmic locations such as endocytic vesicles, also called beta-arrestin signalosomes. Acts as a signaling scaffold for the AKT1 pathway. GPCRs for which the beta-arrestin-mediated signaling relies on both ARRB1 and ARRB2 (codependent regulation) include ADRB2, F2RL1 and PTH1R. For some GPCRs the beta-arrestin-mediated signaling relies on either ARRB1 or ARRB2 and is inhibited by the other respective beta-arrestin form (reciprocal regulation). Increases ERK1/2 signaling in AGTR1- and AVPR2-mediated activation (reciprocal regulation). Involved in CCR7-mediated ERK1/2 signaling involving ligand CCL19. Is involved in type-1A angiotensin II receptor/AGTR1-mediated ERK activity. Is involved in type-1A angiotensin II receptor/AGTR1-mediated MAPK10 activity. Is involved in dopamine-stimulated AKT1 activity in the striatum by disrupting the association of AKT1 with its negative regulator PP2A. Involved in AGTR1-mediated chemotaxis. Appears to function as signaling scaffold involved in regulation of MIP-1-beta-stimulated CCR5-dependent chemotaxis. Involved in attenuation of NF-kappa-B-dependent transcription in response to GPCR or cytokine stimulation by interacting with and stabilizing CHUK. Suppresses UV-induced NF-kappa-B-dependent activation by interacting with CHUK. The function is promoted by stimulation of ADRB2 and dephosphorylation of ARRB2. Involved in IL8-mediated granule release in neutrophils. Involved in p53/TP53-mediated apoptosis by regulating MDM2 and reducing the MDM2-mediated degradation of p53/TP53. May serve as nuclear messenger for GPCRs. Upon stimulation of OR1D2, may be involved in regulation of gene expression during the early processes of fertilization. Also involved in regulation of receptors other than GPCRs. Involved in endocytosis of TGFBR2 and TGFBR3 and down-regulates TGF-beta signaling such as NF-kappa-B activation. Involved in endocytosis of low-density lipoprotein receptor/LDLR. Involved in endocytosis of smoothened homolog/Smo, which also requires GRK2. Involved in endocytosis of SLC9A5. Involved in endocytosis of ENG and subsequent TGF-beta-mediated ERK activation and migration of epithelial cells. Involved in Toll-like receptor and IL-1 receptor signaling through the interaction with TRAF6 which prevents TRAF6 autoubiquitination and oligomerization required for activation of NF-kappa-B and JUN. Involved in insulin resistance by acting as insulin-induced signaling scaffold for SRC, AKT1 and INSR. Involved in regulation of inhibitory signaling of natural killer cells by recruiting PTPN6 and PTPN11 to KIR2DL1. Involved in the internalization of the atypical chemokine receptor ACKR3. Acts as an adapter protein coupling FFAR4 receptor to specific downstream signaling pathways, as well as mediating receptor endocytosis. During the activation step of NLRP3 inflammasome, directly associates with NLRP3 leading to inhibition of pro-inflammatory cytokine release and inhibition of inflammation. This chain is Beta-arrestin-2 (Arrb2), found in Rattus norvegicus (Rat).